Consider the following 665-residue polypeptide: Fructose-1,6-bisphosphatase class 3 (665 aa).

It belongs to the FBPase class 3 family. Mn(2+) serves as cofactor.

It carries out the reaction beta-D-fructose 1,6-bisphosphate + H2O = beta-D-fructose 6-phosphate + phosphate. It participates in carbohydrate biosynthesis; gluconeogenesis. This Clostridium novyi (strain NT) protein is Fructose-1,6-bisphosphatase class 3.